The sequence spans 229 residues: Cytochrome c oxidase subunit 2 (229 aa).

Topologically, residues 1-26 are mitochondrial intermembrane; sequence MATWAQLNFQDAASPMMEQLHYFHDH. The helical transmembrane segment at 27–48 threads the bilayer; that stretch reads TMMVLVIITIMVAYIMGTMFFN. Over 49-62 the chain is Mitochondrial matrix; it reads KDVNRYLLDGQKIE. A helical transmembrane segment spans residues 63 to 82; it reads TEWTIVPVFVLVIIAMPSLR. The Mitochondrial intermembrane portion of the chain corresponds to 83 to 229; it reads LLYLLDEVNE…INWIQNMSEA (147 aa). Cu cation contacts are provided by H161, C196, E198, C200, H204, and M207. E198 provides a ligand contact to Mg(2+).

The protein belongs to the cytochrome c oxidase subunit 2 family. Component of the cytochrome c oxidase (complex IV, CIV), a multisubunit enzyme composed of a catalytic core of 3 subunits and several supernumerary subunits. The complex exists as a monomer or a dimer and forms supercomplexes (SCs) in the inner mitochondrial membrane with ubiquinol-cytochrome c oxidoreductase (cytochrome b-c1 complex, complex III, CIII). Cu cation serves as cofactor.

The protein localises to the mitochondrion inner membrane. The enzyme catalyses 4 Fe(II)-[cytochrome c] + O2 + 8 H(+)(in) = 4 Fe(III)-[cytochrome c] + 2 H2O + 4 H(+)(out). Functionally, component of the cytochrome c oxidase, the last enzyme in the mitochondrial electron transport chain which drives oxidative phosphorylation. The respiratory chain contains 3 multisubunit complexes succinate dehydrogenase (complex II, CII), ubiquinol-cytochrome c oxidoreductase (cytochrome b-c1 complex, complex III, CIII) and cytochrome c oxidase (complex IV, CIV), that cooperate to transfer electrons derived from NADH and succinate to molecular oxygen, creating an electrochemical gradient over the inner membrane that drives transmembrane transport and the ATP synthase. Cytochrome c oxidase is the component of the respiratory chain that catalyzes the reduction of oxygen to water. Electrons originating from reduced cytochrome c in the intermembrane space (IMS) are transferred via the dinuclear copper A center (CU(A)) of subunit 2 and heme A of subunit 1 to the active site in subunit 1, a binuclear center (BNC) formed by heme A3 and copper B (CU(B)). The BNC reduces molecular oxygen to 2 water molecules using 4 electrons from cytochrome c in the IMS and 4 protons from the mitochondrial matrix. This chain is Cytochrome c oxidase subunit 2 (COII), found in Sympetrum striolatum (Common darter dragonfly).